Consider the following 147-residue polypeptide: Mitochondrial import receptor subunit TOM20 homolog (147 aa).

The Mitochondrial intermembrane portion of the chain corresponds to 1 to 3 (MVA). A helical transmembrane segment spans residues 4–26 (VGKTSAIAAGVCGALLLGYCIYF). Residues 27-147 (DRKRRSDPNF…AQNLSEDDVE (121 aa)) lie on the Cytoplasmic side of the membrane.

Belongs to the Tom20 family. As to quaternary structure, forms part of the preprotein translocase complex of the outer mitochondrial membrane (TOM complex). Interacts with tom22.

It is found in the mitochondrion outer membrane. Central component of the receptor complex responsible for the recognition and translocation of cytosolically synthesized mitochondrial preproteins. Together with tom22 functions as the transit peptide receptor at the surface of the mitochondrion outer membrane and facilitates the movement of preproteins into the tom40 translocation pore. This is Mitochondrial import receptor subunit TOM20 homolog (tomm20) from Xenopus laevis (African clawed frog).